Consider the following 181-residue polypeptide: dCTP deaminase (181 aa).

DCTP contacts are provided by residues 100–105 (RSTFAR) and Asp116. Residue Glu126 is the Proton donor/acceptor of the active site. Residues Tyr158 and Gln165 each contribute to the dCTP site. Positions 160–181 (GKYQGQRGVTPPKLDNSSSKNF) are disordered.

The protein belongs to the dCTP deaminase family. In terms of assembly, homotrimer.

The catalysed reaction is dCTP + H2O + H(+) = dUTP + NH4(+). It participates in pyrimidine metabolism; dUMP biosynthesis; dUMP from dCTP (dUTP route): step 1/2. Its function is as follows. Catalyzes the deamination of dCTP to dUTP. The chain is dCTP deaminase from Desulfurococcus amylolyticus (strain DSM 18924 / JCM 16383 / VKM B-2413 / 1221n) (Desulfurococcus kamchatkensis).